Reading from the N-terminus, the 256-residue chain is Large ribosomal subunit protein bL28m (256 aa).

The transit peptide at 1–55 (MPLHKVPVGLWKRLRLREGIYSRLPAHYLRSLEEARTPTPVHFRPHGAKFKINPK) directs the protein to the mitochondrion.

It belongs to the bacterial ribosomal protein bL28 family. As to quaternary structure, component of the mitochondrial ribosome large subunit (39S) which comprises a 16S rRNA and about 50 distinct proteins. Interacts with OXA1L.

Its subcellular location is the mitochondrion. The protein is Large ribosomal subunit protein bL28m (MRPL28) of Bos taurus (Bovine).